Here is a 431-residue protein sequence, read N- to C-terminus: UPF0597 protein BVU_2091 (431 aa).

It belongs to the UPF0597 family.

This Phocaeicola vulgatus (strain ATCC 8482 / DSM 1447 / JCM 5826 / CCUG 4940 / NBRC 14291 / NCTC 11154) (Bacteroides vulgatus) protein is UPF0597 protein BVU_2091.